Reading from the N-terminus, the 253-residue chain is MLTRKQHELLLFIDRHLKQTGFSPSFDEMKDALNLRSKSGIHRLISALEERDFLRRRHHRARALEVLRLPETMPAATGKPPLAESGPPPVTAPATDESAAAESFVPNVIKGDFANRLAGASVATEAGAIHLPFYGRIAAGQPIEALRETGAQIEVPMNLLGHGEHYALEVAGDSMIEAGILDGDTVIIRRGDVAQNGQIVVALIDDQEVTLKRLRRRGSTIALEPANARYEPRIVPSDRVRIQGQLVGLLRRY.

Positions 26 to 46 (FDEMKDALNLRSKSGIHRLIS) form a DNA-binding region, H-T-H motif. The disordered stretch occupies residues 73–97 (MPAATGKPPLAESGPPPVTAPATDE). Catalysis depends on for autocatalytic cleavage activity residues S174 and K212.

This sequence belongs to the peptidase S24 family. Homodimer.

It carries out the reaction Hydrolysis of Ala-|-Gly bond in repressor LexA.. Its function is as follows. Represses a number of genes involved in the response to DNA damage (SOS response), including recA and lexA. In the presence of single-stranded DNA, RecA interacts with LexA causing an autocatalytic cleavage which disrupts the DNA-binding part of LexA, leading to derepression of the SOS regulon and eventually DNA repair. The polypeptide is LexA repressor (Gluconacetobacter diazotrophicus (strain ATCC 49037 / DSM 5601 / CCUG 37298 / CIP 103539 / LMG 7603 / PAl5)).